Consider the following 327-residue polypeptide: HTH-type transcriptional regulator EbgR (327 aa).

The 57-residue stretch at 1-57 (MATLKDIAIEAGVSLATVSRVLNDDPTLNVKEETKHRILEIAEKLEYKTSSARKLQT) folds into the HTH lacI-type domain. The segment at residues 4-23 (LKDIAIEAGVSLATVSRVLN) is a DNA-binding region (H-T-H motif).

Its function is as follows. Repressor for beta galactosidase alpha and beta subunits (ebgA and ebgC). Binds lactose as an inducer. The chain is HTH-type transcriptional regulator EbgR (ebgR) from Escherichia coli (strain K12).